The primary structure comprises 150 residues: Large ribosomal subunit protein bL9 (150 aa).

This sequence belongs to the bacterial ribosomal protein bL9 family.

Its function is as follows. Binds to the 23S rRNA. This chain is Large ribosomal subunit protein bL9, found in Alteromonas mediterranea (strain DSM 17117 / CIP 110805 / LMG 28347 / Deep ecotype).